Here is a 471-residue protein sequence, read N- to C-terminus: Cysteine--tRNA ligase (471 aa).

C29 lines the Zn(2+) pocket. The 'HIGH' region motif lies at 31–41 (PTVYNYIHIGN). Zn(2+) is bound by residues C209, H234, and E238. The short motif at 266 to 270 (KMSKS) is the 'KMSKS' region element. ATP is bound at residue K269.

The protein belongs to the class-I aminoacyl-tRNA synthetase family. Monomer. The cofactor is Zn(2+).

The protein resides in the cytoplasm. The catalysed reaction is tRNA(Cys) + L-cysteine + ATP = L-cysteinyl-tRNA(Cys) + AMP + diphosphate. The sequence is that of Cysteine--tRNA ligase from Listeria monocytogenes serotype 4b (strain CLIP80459).